Here is a 274-residue protein sequence, read N- to C-terminus: Proteasome subunit beta (274 aa).

A propeptide spans 1-52 (MPDPTGVAGRLPAVFMTPGTSSFTDFLSVAAPDLLPGARGPLPAPVTDAAHG) (removed in mature form; by autocatalysis). The active-site Nucleophile is the threonine 53.

It belongs to the peptidase T1B family. In terms of assembly, the 20S proteasome core is composed of 14 alpha and 14 beta subunits that assemble into four stacked heptameric rings, resulting in a barrel-shaped structure. The two inner rings, each composed of seven catalytic beta subunits, are sandwiched by two outer rings, each composed of seven alpha subunits. The catalytic chamber with the active sites is on the inside of the barrel. Has a gated structure, the ends of the cylinder being occluded by the N-termini of the alpha-subunits. Is capped by the proteasome-associated ATPase, ARC.

It is found in the cytoplasm. The enzyme catalyses Cleavage of peptide bonds with very broad specificity.. The protein operates within protein degradation; proteasomal Pup-dependent pathway. Its activity is regulated as follows. The formation of the proteasomal ATPase ARC-20S proteasome complex, likely via the docking of the C-termini of ARC into the intersubunit pockets in the alpha-rings, may trigger opening of the gate for substrate entry. Interconversion between the open-gate and close-gate conformations leads to a dynamic regulation of the 20S proteasome proteolysis activity. Component of the proteasome core, a large protease complex with broad specificity involved in protein degradation. This Parafrankia sp. (strain EAN1pec) protein is Proteasome subunit beta.